The chain runs to 433 residues: Pseudopaline synthase (433 aa).

The helical transmembrane segment at 7–27 threads the bilayer; sequence SLGNVLLVGLGAVAIQVALDL. NAD(+)-binding positions include 16–19, 39–40, and Thr154; these read LGAV and NH. The active-site Proton donor/acceptor is the His219. Position 364 (Glu364) interacts with NAD(+).

Belongs to the staphylopine dehydrogenase family. In terms of assembly, homodimer. Interacts with CntL.

Its subcellular location is the cell membrane. The enzyme catalyses pseudopaline + NAD(+) + H2O = (2S)-2-amino-4-{[(1S)-1-carboxy-2-(1H-imidazol-4-yl)ethyl]amino}butanoate + 2-oxoglutarate + NADH + H(+). Its function is as follows. Catalyzes the NADH-dependent reductive condensation of alpha-ketoglutarate to the intermediate formed by the adjacently encoded enzyme CntL, namely (2S)-2-amino-4-{[(1S)-1-carboxy-2-(1H-imidazol-4-yl)ethyl]amino}butanoate, leading to the production of pseudopaline. This is the last step in the biosynthesis of the metallophore pseudopaline, which is involved in the acquisition of nickel and zinc, and thus enables bacterial growth inside the host, where metal access is limited. Therefore, this enzyme probably contributes to Pseudomonas virulence. Can use neither pyruvate nor NADPH in place of alpha-ketoglutarate and NADH, respectively. In Pseudomonas aeruginosa (strain UCBPP-PA14), this protein is Pseudopaline synthase.